The primary structure comprises 354 residues: Ferredoxin--NADP reductase (354 aa).

Residues D39, Q47, Y52, V92, F127, D296, and T337 each coordinate FAD.

This sequence belongs to the ferredoxin--NADP reductase type 2 family. In terms of assembly, homodimer. Requires FAD as cofactor.

The catalysed reaction is 2 reduced [2Fe-2S]-[ferredoxin] + NADP(+) + H(+) = 2 oxidized [2Fe-2S]-[ferredoxin] + NADPH. This Albidiferax ferrireducens (strain ATCC BAA-621 / DSM 15236 / T118) (Rhodoferax ferrireducens) protein is Ferredoxin--NADP reductase.